Here is a 204-residue protein sequence, read N- to C-terminus: Ras-related protein R-Ras2 (204 aa).

Ala2 is modified (N-acetylalanine). 21–29 (GGGGVGKSA) is a binding site for GTP. Residues 43–51 (YDPTIEDSY) carry the Effector region motif. GTP is bound by residues 68 to 72 (DTAGQ), 127 to 130 (NKAD), and 157 to 159 (SAK). Ser186 is subject to Phosphoserine. Residues Lys192, Lys194, Lys196, and Lys197 are each lipidated (N6-palmitoyl lysine). Cys199 is lipidated: S-palmitoyl cysteine. A Cysteine methyl ester modification is found at Cys201. Cys201 is lipidated: S-farnesyl cysteine. The propeptide at 202–204 (VIF) is removed in mature form.

The protein belongs to the small GTPase superfamily. Ras family. As to quaternary structure, interacts with RASSF5. May be post-translationally modified by both palmitoylation and polyisoprenylation. Post-translationally, fatty-acylation at Lys-192, Lys-194; lys-196 and Lys-197 is required for localization to the plasma membrane and activity. Defatty-acylated by SIRT6, affecting its localization to the plasma membrane. In terms of tissue distribution, ubiquitously present in all tissues examined, with the highest levels in heart, placenta, and skeletal muscle. Moderate levels in lung and liver; low levels in brain, kidney, and pancreas.

It is found in the cell membrane. Its subcellular location is the golgi apparatus membrane. It catalyses the reaction GTP + H2O = GDP + phosphate + H(+). Its function is as follows. GTP-binding protein with GTPase activity, involved in the regulation of MAPK signaling pathway and thereby controlling multiple cellular processes. Regulates craniofacial development. The chain is Ras-related protein R-Ras2 from Homo sapiens (Human).